We begin with the raw amino-acid sequence, 346 residues long: UDP-N-acetylenolpyruvoylglucosamine reductase (346 aa).

The FAD-binding PCMH-type domain occupies 17 to 187 (IESQAYALIE…VAVGFTLKKE (171 aa)). Arg-163 is a catalytic residue. Ser-233 (proton donor) is an active-site residue. Glu-329 is an active-site residue.

Belongs to the MurB family. The cofactor is FAD.

It is found in the cytoplasm. The enzyme catalyses UDP-N-acetyl-alpha-D-muramate + NADP(+) = UDP-N-acetyl-3-O-(1-carboxyvinyl)-alpha-D-glucosamine + NADPH + H(+). The protein operates within cell wall biogenesis; peptidoglycan biosynthesis. Its function is as follows. Cell wall formation. The polypeptide is UDP-N-acetylenolpyruvoylglucosamine reductase (Photobacterium profundum (strain SS9)).